The following is a 437-amino-acid chain: MHNHVFKTIARHGLIALFFFFSISAMAAEVAKMDRIVAIVDQGVITEKELEDRIQTVIAQLEKQGTQLPPRDVLQKQILERLINDRLQLQYAAQTGLRVDDAQLDKTIERIAEQNKLSTGEFRKALEAEGIPYRKFREDIRNEIILARLREREVDNRVNVTESEIDNFLTTQSSRNDIQDEFEVAHILIRAPEESTPEELQKLKAKAEAALKELQSGADFAQVSAGYSDAPNALEGGILGWKASSQLPSLFVDALQALQPGQLSPVLRSPNGYHILKLLNRRGGSSPLVVDQTHVRHILIKLSEVVSELEAEQKINSIKERLDHGADFAELARQYSEDASANNGGDLGWTNAGDTVPAFEKAMNALDINEISAPVRTPFGWHIIQVLERRKQDMTQESARLKARQEIRARKADDAFQDWLSELRDRAYVEYRLEDKY.

A signal peptide spans 1 to 27; that stretch reads MHNHVFKTIARHGLIALFFFFSISAMA. PpiC domains are found at residues 179–280 and 290–388; these read QDEF…KLLN and VDQT…QVLE.

The protein resides in the periplasm. The enzyme catalyses [protein]-peptidylproline (omega=180) = [protein]-peptidylproline (omega=0). In terms of biological role, chaperone involved in the correct folding and assembly of outer membrane proteins. Recognizes specific patterns of aromatic residues and the orientation of their side chains, which are found more frequently in integral outer membrane proteins. May act in both early periplasmic and late outer membrane-associated steps of protein maturation. The sequence is that of Chaperone SurA from Methylobacillus flagellatus (strain ATCC 51484 / DSM 6875 / VKM B-1610 / KT).